A 369-amino-acid chain; its full sequence is Putative esterase slr0264 (369 aa).

Residues serine 162, aspartate 303, and histidine 334 each act as charge relay system in the active site.

This sequence belongs to the AB hydrolase superfamily. AB hydrolase 4 family.

The polypeptide is Putative esterase slr0264 (Synechocystis sp. (strain ATCC 27184 / PCC 6803 / Kazusa)).